The sequence spans 465 residues: Iron-sulfur cluster assembly SufBD family protein SH2035 (465 aa).

Belongs to the iron-sulfur cluster assembly SufBD family.

This Staphylococcus haemolyticus (strain JCSC1435) protein is Iron-sulfur cluster assembly SufBD family protein SH2035.